A 298-amino-acid polypeptide reads, in one-letter code: Probable pyridoxal 5'-phosphate synthase subunit SNZ3 (298 aa).

Asp-21 lines the D-ribose 5-phosphate pocket. The active-site Schiff-base intermediate with D-ribose 5-phosphate is the Lys-78. D-ribose 5-phosphate contacts are provided by residues Gly-150, Gly-213, and 234-235 (GS).

The protein belongs to the PdxS/SNZ family. Homohexamer. Interacts with THI11.

It catalyses the reaction aldehydo-D-ribose 5-phosphate + D-glyceraldehyde 3-phosphate + L-glutamine = pyridoxal 5'-phosphate + L-glutamate + phosphate + 3 H2O + H(+). It participates in cofactor biosynthesis; pyridoxal 5'-phosphate biosynthesis. In terms of biological role, catalyzes the formation of pyridoxal 5'-phosphate from ribose 5-phosphate (RBP), glyceraldehyde 3-phosphate (G3P) and ammonia. The ammonia is provided by a SNO isoform. Can also use ribulose 5-phosphate and dihydroxyacetone phosphate as substrates, resulting from enzyme-catalyzed isomerization of RBP and G3P, respectively. The chain is Probable pyridoxal 5'-phosphate synthase subunit SNZ3 (SNZ3) from Saccharomyces cerevisiae (strain ATCC 204508 / S288c) (Baker's yeast).